We begin with the raw amino-acid sequence, 87 residues long: Putative membrane protein insertion efficiency factor (87 aa).

The protein belongs to the UPF0161 family.

Its subcellular location is the cell membrane. Could be involved in insertion of integral membrane proteins into the membrane. This chain is Putative membrane protein insertion efficiency factor, found in Streptococcus pyogenes serotype M12 (strain MGAS2096).